The primary structure comprises 308 residues: Putative lipid kinase SH2167 (308 aa).

Residues 1 to 139 form the DAGKc domain; the sequence is MGQKFNHGVL…YDVMKVNGTY (139 aa). ATP contacts are provided by residues Ser-44, 74–80, and Thr-101; that span reads GDGTVNE. Mg(2+) contacts are provided by Ser-220, Asp-223, and Lys-225. Glu-281 functions as the Proton acceptor in the catalytic mechanism.

The protein belongs to the diacylglycerol/lipid kinase family. The cofactor is Mg(2+).

Its function is as follows. May catalyze the ATP-dependent phosphorylation of lipids other than diacylglycerol (DAG). This is Putative lipid kinase SH2167 from Staphylococcus haemolyticus (strain JCSC1435).